The primary structure comprises 60 residues: Potassium channel toxin Tst-beta-KTx (60 aa).

The BetaSPN-type CS-alpha/beta domain maps to 26-60 (QFGCPAYEGYCNDHCNDIERKDGECHGFKCKCAKD). 3 disulfide bridges follow: Cys-29–Cys-50, Cys-36–Cys-55, and Cys-40–Cys-57.

Belongs to the long chain scorpion toxin family. Class 1 subfamily. Expressed by the venom gland.

Its subcellular location is the secreted. Functionally, inhibits voltage-gated potassium channels Kv1.1/KCNA1, Kv1.2/KCNA2, and Kv1.3/KCNA3. In terms of biological role, does not induce hemolytic activity, lactate dehydrogenase (LDH) release from mast cells, mast cell degranulation, and antimicrobial effects. In vivo, injection into mice causes moderate edema formation, but induces very weak or no change in nociceptive sensibility. It also reduces mice locomotion, suggesting an increase in anxiety, but causes no alteration in rearing (standing on hind limbs). This Tityus stigmurus (Brazilian scorpion) protein is Potassium channel toxin Tst-beta-KTx.